The following is a 253-amino-acid chain: N-acetylglucosaminyl-phosphatidylinositol de-N-acetylase (253 aa).

The helical transmembrane segment at 3–23 (VAAPLLCLAAAVLVWGVLWVW) threads the bilayer. Topologically, residues 24–253 (GSWERMTRPE…YMRINSLNFL (230 aa)) are cytoplasmic.

Belongs to the PIGL family.

The protein localises to the endoplasmic reticulum membrane. The catalysed reaction is a 6-(N-acetyl-alpha-D-glucosaminyl)-1-(1,2-diacyl-sn-glycero-3-phospho)-1D-myo-inositol + H2O = a 6-(alpha-D-glucosaminyl)-1-(1,2-diacyl-sn-glycero-3-phospho)-1D-myo-inositol + acetate. It participates in glycolipid biosynthesis; glycosylphosphatidylinositol-anchor biosynthesis. Functionally, catalyzes the second step of glycosylphosphatidylinositol (GPI) biosynthesis, which is the de-N-acetylation of N-acetylglucosaminyl-phosphatidylinositol. The chain is N-acetylglucosaminyl-phosphatidylinositol de-N-acetylase (PIGL) from Bos taurus (Bovine).